A 103-amino-acid chain; its full sequence is Large ribosomal subunit protein bL21 (103 aa).

This sequence belongs to the bacterial ribosomal protein bL21 family. In terms of assembly, part of the 50S ribosomal subunit. Contacts protein L20.

This protein binds to 23S rRNA in the presence of protein L20. In Aeromonas salmonicida (strain A449), this protein is Large ribosomal subunit protein bL21.